The sequence spans 245 residues: Biosynthetic peptidoglycan transglycosylase (245 aa).

Residues 20–42 (VYAGSVFAGAWLATQLFYLAQIA) traverse the membrane as a helical segment.

The protein belongs to the glycosyltransferase 51 family.

The protein resides in the cell inner membrane. The enzyme catalyses [GlcNAc-(1-&gt;4)-Mur2Ac(oyl-L-Ala-gamma-D-Glu-L-Lys-D-Ala-D-Ala)](n)-di-trans,octa-cis-undecaprenyl diphosphate + beta-D-GlcNAc-(1-&gt;4)-Mur2Ac(oyl-L-Ala-gamma-D-Glu-L-Lys-D-Ala-D-Ala)-di-trans,octa-cis-undecaprenyl diphosphate = [GlcNAc-(1-&gt;4)-Mur2Ac(oyl-L-Ala-gamma-D-Glu-L-Lys-D-Ala-D-Ala)](n+1)-di-trans,octa-cis-undecaprenyl diphosphate + di-trans,octa-cis-undecaprenyl diphosphate + H(+). It functions in the pathway cell wall biogenesis; peptidoglycan biosynthesis. Peptidoglycan polymerase that catalyzes glycan chain elongation from lipid-linked precursors. In Burkholderia lata (strain ATCC 17760 / DSM 23089 / LMG 22485 / NCIMB 9086 / R18194 / 383), this protein is Biosynthetic peptidoglycan transglycosylase.